A 353-amino-acid chain; its full sequence is MGTPNPRTWSELPPDLLGSIFHRLSFTDFHRAKIVCWNWNLSSKLTVPKKIRSPWLMLFPEGDNEDGSVLLFNPEEEEKIYKTKRYFSGIRFLANSGKWFLLIDSLFNLYIIDVFSENKIDLLPLEESLLDKEESEDLTGLLWVDEKTAEYVVVLFFNFPSGNVGFCKKGDDHYTKIPLHCGVPWRLQGLIDAVLLGYRLYIRTELSYIRILDLSTQQGFEDVNKYEPFQVFSSTQDCSIAVTTRGEVLLVKSILDNTTIGSHRRFCIFKNIDYNPQEEVDSLGDEALLLNLGILLPSIAPNSIYFTRHGRIYHKEHFNLDLCVFNLETKTLKRFPSLANMKLKDAQWFFPGI.

The F-box domain maps to 6–58 (PRTWSELPPDLLGSIFHRLSFTDFHRAKIVCWNWNLSSKLTVPKKIRSPWLML).

The chain is F-box protein At2g14290 from Arabidopsis thaliana (Mouse-ear cress).